A 197-amino-acid chain; its full sequence is Putative RNA-binding protein EEED8.12 (197 aa).

Positions 61 to 138 (KSVFIGNVDF…RPIVVTAKRT (78 aa)) constitute an RRM domain. The interval 142–166 (GMGHGVRGSSRGTFGRGRGAARGAP) is disordered.

The chain is Putative RNA-binding protein EEED8.12 from Caenorhabditis elegans.